Consider the following 481-residue polypeptide: Multiple inositol polyphosphate phosphatase 1 (481 aa).

The first 30 residues, 1–30 (MLRGARSHLPASVAPAAVLAAALLSSFARC), serve as a signal peptide directing secretion. The active site involves histidine 89. N-linked (GlcNAc...) asparagine glycans are attached at residues asparagine 236 and asparagine 475. A Prevents secretion from ER motif is present at residues 478–481 (SDEL).

It belongs to the histidine acid phosphatase family. MINPP1 subfamily. In terms of processing, N-glycosylated. Widely expressed with highest levels in kidney, intestine, thymus and liver.

Its subcellular location is the endoplasmic reticulum lumen. The protein resides in the secreted. It localises to the cell membrane. It catalyses the reaction 1D-myo-inositol hexakisphosphate + H2O = 1D-myo-inositol 1,2,4,5,6-pentakisphosphate + phosphate. The enzyme catalyses 1D-myo-inositol 1,2,4,5,6-pentakisphosphate + H2O = 1D-myo-inositol 1,2,5,6-tetrakisphosphate + phosphate. It carries out the reaction 1D-myo-inositol 1,2,5,6-tetrakisphosphate + H2O = 1D-myo-inositol 1,2,6-trisphosphate + phosphate. The catalysed reaction is 1D-myo-inositol 1,2,6-trisphosphate + H2O = 1D-myo-inositol 1,2-bisphosphate + phosphate. It catalyses the reaction 1D-myo-inositol 1,2-bisphosphate + H2O = 1D-myo-inositol 2-phosphate + phosphate. The enzyme catalyses 1D-myo-inositol hexakisphosphate + H2O = 1D-myo-inositol 1,2,3,5,6-pentakisphosphate + phosphate. It carries out the reaction 1D-myo-inositol 1,2,3,5,6-pentakisphosphate + H2O = 1D-myo-inositol 1,2,3,6-tetrakisphosphate + phosphate. The catalysed reaction is 1D-myo-inositol 1,2,3,6-tetrakisphosphate + H2O = 1D-myo-inositol 1,2,3-trisphosphate + phosphate. It catalyses the reaction 1D-myo-inositol 1,2,3-trisphosphate + H2O = 1D-myo-inositol 2,3-bisphosphate + phosphate. The enzyme catalyses 1D-myo-inositol 2,3-bisphosphate + H2O = 1D-myo-inositol 2-phosphate + phosphate. It carries out the reaction 1D-myo-inositol 1,3,4,5,6-pentakisphosphate + H2O = 1D-myo-inositol 1,4,5,6-tetrakisphosphate + phosphate. The catalysed reaction is 1D-myo-inositol 1,4,5,6-tetrakisphosphate + H2O = 1D-myo-inositol 1,4,5-trisphosphate + phosphate. It catalyses the reaction (2R)-2,3-bisphosphoglycerate + H2O = (2R)-2-phosphoglycerate + phosphate. Its function is as follows. Multiple inositol polyphosphate phosphatase that hydrolyzes 1D-myo-inositol 1,3,4,5,6-pentakisphosphate (InsP5[2OH]) and 1D-myo-inositol hexakisphosphate (InsP6) to a range of less phosphorylated inositol phosphates. This regulates the availability of these various small molecule second messengers and metal chelators which control many aspects of cell physiology. Has a weak in vitro activity towards 1D-myo-inositol 1,4,5-trisphosphate which is unlikely to be physiologically relevant. By regulating intracellular inositol polyphosphates pools, which act as metal chelators, it may control the availability of intracellular calcium and iron, which are important for proper neuronal development and homeostasis. May have a dual substrate specificity, and function as a 2,3-bisphosphoglycerate 3-phosphatase hydrolyzing 2,3-bisphosphoglycerate to 2-phosphoglycerate. 2,3-bisphosphoglycerate (BPG) is formed as part of the Rapoport-Luebering glycolytic bypass and is a regulator of systemic oxygen homeostasis as the major allosteric effector of hemoglobin. This chain is Multiple inositol polyphosphate phosphatase 1, found in Mus musculus (Mouse).